The primary structure comprises 187 residues: NAC domain-containing protein 104 (187 aa).

One can recognise an NAC domain in the interval 3–155; the sequence is LPPGFRFFPT…KWVICRVYEQ (153 aa). A DNA-binding region spans residues 94 to 161; sequence VGIKKYLTFY…VYEQNCSEEE (68 aa). Positions 118–142 are disordered; it reads LPDSSSSSSRSSKRSSRASSSSHKP.

As to expression, expressed in root xylem vessels. Expressed in stems, vascular tissue of cauline leaves and tracheary elements of sepals.

The protein localises to the nucleus. In terms of biological role, probable transcription factor that influences tracheary elements and xylem development by negatively regulating secondary cell wall fiber synthesis and programmed cell death. This chain is NAC domain-containing protein 104, found in Arabidopsis thaliana (Mouse-ear cress).